Here is a 451-residue protein sequence, read N- to C-terminus: Glucose-6-phosphate isomerase (451 aa).

The active-site Proton donor is Glu291. Active-site residues include His312 and Lys426.

The protein belongs to the GPI family.

Its subcellular location is the cytoplasm. It catalyses the reaction alpha-D-glucose 6-phosphate = beta-D-fructose 6-phosphate. Its pathway is carbohydrate biosynthesis; gluconeogenesis. The protein operates within carbohydrate degradation; glycolysis; D-glyceraldehyde 3-phosphate and glycerone phosphate from D-glucose: step 2/4. Functionally, catalyzes the reversible isomerization of glucose-6-phosphate to fructose-6-phosphate. The chain is Glucose-6-phosphate isomerase from Thermoanaerobacter sp. (strain X514).